The sequence spans 509 residues: Cysteine--tRNA ligase (509 aa).

Position 19 (C19) interacts with Zn(2+). The short motif at 21-31 is the 'HIGH' region element; it reads PTVYNDAHIGH. Zn(2+) is bound by residues C213, H238, and E242. Residues 284-288 carry the 'KMSKS' region motif; the sequence is KMSKS. ATP is bound at residue K287.

This sequence belongs to the class-I aminoacyl-tRNA synthetase family. Zn(2+) serves as cofactor.

It catalyses the reaction tRNA(Cys) + L-cysteine + ATP = L-cysteinyl-tRNA(Cys) + AMP + diphosphate. The sequence is that of Cysteine--tRNA ligase (CARS) from Acanthamoeba polyphaga (Amoeba).